We begin with the raw amino-acid sequence, 153 residues long: Large ribosomal subunit protein uL22 (153 aa).

This sequence belongs to the universal ribosomal protein uL22 family. In terms of assembly, part of the 50S ribosomal subunit.

Its function is as follows. This protein binds specifically to 23S rRNA. It makes multiple contacts with different domains of the 23S rRNA in the assembled 50S subunit and ribosome. The globular domain of the protein is located near the polypeptide exit tunnel on the outside of the subunit, while an extended beta-hairpin is found that lines the wall of the exit tunnel in the center of the 70S ribosome. This Methanococcus maripaludis (strain C5 / ATCC BAA-1333) protein is Large ribosomal subunit protein uL22.